The following is a 281-amino-acid chain: Tetraspanin-33 (281 aa).

At M1 to Y23 the chain is on the cytoplasmic side. Residues L24–V44 traverse the membrane as a helical segment. Topologically, residues Y45–P62 are extracellular. Residues A63 to G83 traverse the membrane as a helical segment. Over S84 to T94 the chain is Cytoplasmic. Residues F95–V115 form a helical membrane-spanning segment. Topologically, residues F116–N233 are extracellular. 4 cysteine pairs are disulfide-bonded: C154-C222, C155-C187, C171-C181, and C188-C201. An N-linked (GlcNAc...) asparagine glycan is attached at N170. Residues L234 to L254 traverse the membrane as a helical segment. The Cytoplasmic segment spans residues S255–S281.

It belongs to the tetraspanin (TM4SF) family. Homodimer; disulfide-linked.

The protein resides in the cell membrane. The protein localises to the cell junction. Its subcellular location is the adherens junction. It localises to the cytoplasm. In terms of biological role, part of TspanC8 subgroup, composed of 6 members that interact with the transmembrane metalloprotease ADAM10. This interaction is required for ADAM10 exit from the endoplasmic reticulum and for enzymatic maturation and trafficking to the cell surface as well as substrate specificity. Different TspanC8/ADAM10 complexes have distinct substrates. The protein is Tetraspanin-33 (tspan33) of Danio rerio (Zebrafish).